Consider the following 707-residue polypeptide: Translation initiation factor eIF2B subunit epsilon (707 aa).

Disordered regions lie at residues 489–526 (HDDIESDESGDEGDKSGGKIKNNKNNDDNPIEPDSVKF) and 686–707 (AEEESDDSDDSDDDDDDSDESD). The region spanning 516–693 (DNPIEPDSVK…KSAEEESDDS (178 aa)) is the W2 domain. Over residues 688–707 (EESDDSDDSDDDDDDSDESD) the composition is skewed to acidic residues.

This sequence belongs to the eIF-2B gamma/epsilon subunits family. In terms of assembly, component of the translation initiation factor 2B (eIF2B) complex which is a heterodecamer of two sets of five different subunits: alpha, beta, gamma, delta and epsilon. Subunits alpha, beta and delta comprise a regulatory subcomplex and subunits epsilon and gamma comprise a catalytic subcomplex. Within the complex, the hexameric regulatory complex resides at the center, with the two heterodimeric catalytic subcomplexes bound on opposite sides.

The protein localises to the cytoplasm. The protein resides in the cytosol. Its function is as follows. Acts as a component of the translation initiation factor 2B (eIF2B) complex, which catalyzes the exchange of GDP for GTP on eukaryotic initiation factor 2 (eIF2) gamma subunit. Its guanine nucleotide exchange factor activity is repressed when bound to eIF2 complex phosphorylated on the alpha subunit, thereby limiting the amount of methionyl-initiator methionine tRNA available to the ribosome and consequently global translation is repressed. The sequence is that of Translation initiation factor eIF2B subunit epsilon (eif2b5) from Dictyostelium discoideum (Social amoeba).